The chain runs to 264 residues: Thymidylate synthase (264 aa).

Arg21 contacts dUMP. His51 contributes to the (6R)-5,10-methylene-5,6,7,8-tetrahydrofolate binding site. Catalysis depends on Cys146, which acts as the Nucleophile. Residues 166–169, Asn177, and 207–209 contribute to the dUMP site; these read RSAD and HIY. Asp169 contributes to the (6R)-5,10-methylene-5,6,7,8-tetrahydrofolate binding site. Ala263 contacts (6R)-5,10-methylene-5,6,7,8-tetrahydrofolate.

It belongs to the thymidylate synthase family. Bacterial-type ThyA subfamily. In terms of assembly, homodimer.

The protein resides in the cytoplasm. It carries out the reaction dUMP + (6R)-5,10-methylene-5,6,7,8-tetrahydrofolate = 7,8-dihydrofolate + dTMP. The protein operates within pyrimidine metabolism; dTTP biosynthesis. Its function is as follows. Catalyzes the reductive methylation of 2'-deoxyuridine-5'-monophosphate (dUMP) to 2'-deoxythymidine-5'-monophosphate (dTMP) while utilizing 5,10-methylenetetrahydrofolate (mTHF) as the methyl donor and reductant in the reaction, yielding dihydrofolate (DHF) as a by-product. This enzymatic reaction provides an intracellular de novo source of dTMP, an essential precursor for DNA biosynthesis. The chain is Thymidylate synthase from Brucella canis (strain ATCC 23365 / NCTC 10854 / RM-666).